Reading from the N-terminus, the 42-residue chain is MSTCEITSGNCRNFPLILAVDCAIIIPNTNFIHSFLIYSLRI.

The helical transmembrane segment at 15-37 (PLILAVDCAIIIPNTNFIHSFLI) threads the bilayer.

The protein resides in the membrane. This is an uncharacterized protein from Dictyostelium discoideum (Social amoeba).